The chain runs to 577 residues: MSGKIPKYFITELLSRTNIIELINTRLELKKYGKNYQTNCPFHHDKTPSFTVSNEKQFYYCFGCNAHGNAIDFLIQYEHLSFIESIEELALIHGVKIPFENTVQNSIYVKKQKLYLLMEKICKLYKKNINVTHLANKYLARRGINQNMIDFFLIGFSSLKWNEFYKKINISKEFEQELLINNIIATDKNGYIYDRFQGRIIFPIQDNHGRIIGFGGRSLNDMSPKYLNSPETDIFYKRKQIYGLYQVIKKCSKPVYLLVVEGYIDVITLTQYNIDYAVSILGTSTTTEHIQLLFKNTDIIICCYDGDDAGKNAAWKTLKKALPYISDKKTLKFILLPNQEDPDTIIRKEGREKFQKRIDNAITMSKFFFKNILKNINLSSDDDKFHLSVHALPLINTISSDTIRIYLRQILARMIGILDDNQFEKFLYEKETKNTQKTYFQIKRTPMRTLIGLLVQNPSLAKLVPVTMKFKNLQIKGLSIFLEILQTCRDNPNIHTGQLLELYRNTTIINVLKILARWDHMIIQKETQNMFLDLLMNIHDKILEKRREYLIAKERKKGLQMNEKKEIWSINKKLSKR.

A CHC2-type zinc finger spans residues 40 to 64 (CPFHHDKTPSFTVSNEKQFYYCFGC). One can recognise a Toprim domain in the interval 255–337 (VYLLVVEGYI…KKTLKFILLP (83 aa)). The Mg(2+) site is built by Glu-261, Asp-305, and Asp-307.

The protein belongs to the DnaG primase family. Monomer. Interacts with DnaB. Requires Zn(2+) as cofactor. It depends on Mg(2+) as a cofactor.

It catalyses the reaction ssDNA + n NTP = ssDNA/pppN(pN)n-1 hybrid + (n-1) diphosphate.. Functionally, RNA polymerase that catalyzes the synthesis of short RNA molecules used as primers for DNA polymerase during DNA replication. The chain is DNA primase from Buchnera aphidicola subsp. Acyrthosiphon pisum (strain APS) (Acyrthosiphon pisum symbiotic bacterium).